The following is a 302-amino-acid chain: Acetylglutamate kinase (302 aa).

Substrate-binding positions include 55 to 56 (GG), R77, and N176.

This sequence belongs to the acetylglutamate kinase family. ArgB subfamily.

It localises to the cytoplasm. The enzyme catalyses N-acetyl-L-glutamate + ATP = N-acetyl-L-glutamyl 5-phosphate + ADP. It functions in the pathway amino-acid biosynthesis; L-arginine biosynthesis; N(2)-acetyl-L-ornithine from L-glutamate: step 2/4. Functionally, catalyzes the ATP-dependent phosphorylation of N-acetyl-L-glutamate. This Corynebacterium efficiens (strain DSM 44549 / YS-314 / AJ 12310 / JCM 11189 / NBRC 100395) protein is Acetylglutamate kinase.